The sequence spans 277 residues: S-formylglutathione hydrolase FrmB (277 aa).

Catalysis depends on charge relay system residues serine 145, aspartate 221, and histidine 254.

This sequence belongs to the esterase D family.

It carries out the reaction S-formylglutathione + H2O = formate + glutathione + H(+). Serine hydrolase involved in the detoxification of formaldehyde. Hydrolyzes S-formylglutathione to glutathione and formate. This Escherichia coli O157:H7 protein is S-formylglutathione hydrolase FrmB (frmB).